Consider the following 242-residue polypeptide: Ubiquinone biosynthesis O-methyltransferase (242 aa).

S-adenosyl-L-methionine is bound by residues Arg36, Gly56, Asp77, and Met130.

Belongs to the methyltransferase superfamily. UbiG/COQ3 family.

The catalysed reaction is a 3-demethylubiquinol + S-adenosyl-L-methionine = a ubiquinol + S-adenosyl-L-homocysteine + H(+). It catalyses the reaction a 3-(all-trans-polyprenyl)benzene-1,2-diol + S-adenosyl-L-methionine = a 2-methoxy-6-(all-trans-polyprenyl)phenol + S-adenosyl-L-homocysteine + H(+). It functions in the pathway cofactor biosynthesis; ubiquinone biosynthesis. Functionally, O-methyltransferase that catalyzes the 2 O-methylation steps in the ubiquinone biosynthetic pathway. The sequence is that of Ubiquinone biosynthesis O-methyltransferase from Pasteurella multocida (strain Pm70).